We begin with the raw amino-acid sequence, 429 residues long: Tyrosine--tRNA ligase (429 aa).

Position 36 (tyrosine 36) interacts with L-tyrosine. The 'HIGH' region motif lies at proline 41–histidine 50. Positions 171 and 175 each coordinate L-tyrosine. Positions lysine 231–serine 235 match the 'KMSKS' region motif. Lysine 234 serves as a coordination point for ATP. The region spanning alanine 360–glycine 417 is the S4 RNA-binding domain.

This sequence belongs to the class-I aminoacyl-tRNA synthetase family. TyrS type 1 subfamily. As to quaternary structure, homodimer.

It is found in the cytoplasm. The enzyme catalyses tRNA(Tyr) + L-tyrosine + ATP = L-tyrosyl-tRNA(Tyr) + AMP + diphosphate + H(+). Catalyzes the attachment of tyrosine to tRNA(Tyr) in a two-step reaction: tyrosine is first activated by ATP to form Tyr-AMP and then transferred to the acceptor end of tRNA(Tyr). The chain is Tyrosine--tRNA ligase from Nocardia farcinica (strain IFM 10152).